We begin with the raw amino-acid sequence, 392 residues long: Imidazolonepropionase (392 aa).

2 residues coordinate Fe(3+): His69 and His71. Positions 69 and 71 each coordinate Zn(2+). 4-imidazolone-5-propanoate-binding residues include Arg78, Tyr136, and His163. N-formimidoyl-L-glutamate is bound at residue Tyr136. His226 serves as a coordination point for Fe(3+). His226 is a binding site for Zn(2+). Gln229 lines the 4-imidazolone-5-propanoate pocket. Residue Asp302 participates in Fe(3+) binding. A Zn(2+)-binding site is contributed by Asp302. The N-formimidoyl-L-glutamate site is built by Asn304 and Gly306. Residue Ser307 participates in 4-imidazolone-5-propanoate binding.

It belongs to the metallo-dependent hydrolases superfamily. HutI family. The cofactor is Zn(2+). Fe(3+) serves as cofactor.

Its subcellular location is the cytoplasm. The catalysed reaction is 4-imidazolone-5-propanoate + H2O = N-formimidoyl-L-glutamate. The protein operates within amino-acid degradation; L-histidine degradation into L-glutamate; N-formimidoyl-L-glutamate from L-histidine: step 3/3. Functionally, catalyzes the hydrolytic cleavage of the carbon-nitrogen bond in imidazolone-5-propanoate to yield N-formimidoyl-L-glutamate. It is the third step in the universal histidine degradation pathway. The protein is Imidazolonepropionase of Salinispora tropica (strain ATCC BAA-916 / DSM 44818 / JCM 13857 / NBRC 105044 / CNB-440).